The chain runs to 224 residues: UPF0173 metal-dependent hydrolase Memar_1421 (224 aa).

This sequence belongs to the UPF0173 family.

This chain is UPF0173 metal-dependent hydrolase Memar_1421, found in Methanoculleus marisnigri (strain ATCC 35101 / DSM 1498 / JR1).